We begin with the raw amino-acid sequence, 245 residues long: 5-oxoprolinase subunit A (245 aa).

It belongs to the LamB/PxpA family. Forms a complex composed of PxpA, PxpB and PxpC.

It carries out the reaction 5-oxo-L-proline + ATP + 2 H2O = L-glutamate + ADP + phosphate + H(+). Catalyzes the cleavage of 5-oxoproline to form L-glutamate coupled to the hydrolysis of ATP to ADP and inorganic phosphate. This chain is 5-oxoprolinase subunit A, found in Neisseria meningitidis serogroup C (strain 053442).